The sequence spans 475 residues: Ribulose bisphosphate carboxylase large chain (475 aa).

The propeptide occupies 1–2 (MS). Position 3 is an N-acetylproline (Pro3). Lys14 bears the N6,N6,N6-trimethyllysine mark. The substrate site is built by Asn123 and Thr173. The active-site Proton acceptor is Lys175. Lys177 is a binding site for substrate. The Mg(2+) site is built by Lys201, Asp203, and Glu204. Lys201 bears the N6-carboxylysine mark. The active-site Proton acceptor is the His294. Substrate contacts are provided by Arg295, His327, and Ser379.

This sequence belongs to the RuBisCO large chain family. Type I subfamily. Heterohexadecamer of 8 large chains and 8 small chains; disulfide-linked. The disulfide link is formed within the large subunit homodimers. Requires Mg(2+) as cofactor. Post-translationally, the disulfide bond which can form in the large chain dimeric partners within the hexadecamer appears to be associated with oxidative stress and protein turnover.

The protein localises to the plastid. Its subcellular location is the chloroplast. It carries out the reaction 2 (2R)-3-phosphoglycerate + 2 H(+) = D-ribulose 1,5-bisphosphate + CO2 + H2O. The enzyme catalyses D-ribulose 1,5-bisphosphate + O2 = 2-phosphoglycolate + (2R)-3-phosphoglycerate + 2 H(+). In terms of biological role, ruBisCO catalyzes two reactions: the carboxylation of D-ribulose 1,5-bisphosphate, the primary event in carbon dioxide fixation, as well as the oxidative fragmentation of the pentose substrate in the photorespiration process. Both reactions occur simultaneously and in competition at the same active site. This chain is Ribulose bisphosphate carboxylase large chain, found in Citrus sinensis (Sweet orange).